Here is a 364-residue protein sequence, read N- to C-terminus: UDP-N-acetylglucosamine--N-acetylmuramyl-(pentapeptide) pyrophosphoryl-undecaprenol N-acetylglucosamine transferase (364 aa).

UDP-N-acetyl-alpha-D-glucosamine contacts are provided by residues 15 to 17, N123, R164, S191, and Q286; that span reads TGG.

This sequence belongs to the glycosyltransferase 28 family. MurG subfamily.

It localises to the cell inner membrane. It carries out the reaction di-trans,octa-cis-undecaprenyl diphospho-N-acetyl-alpha-D-muramoyl-L-alanyl-D-glutamyl-meso-2,6-diaminopimeloyl-D-alanyl-D-alanine + UDP-N-acetyl-alpha-D-glucosamine = di-trans,octa-cis-undecaprenyl diphospho-[N-acetyl-alpha-D-glucosaminyl-(1-&gt;4)]-N-acetyl-alpha-D-muramoyl-L-alanyl-D-glutamyl-meso-2,6-diaminopimeloyl-D-alanyl-D-alanine + UDP + H(+). The protein operates within cell wall biogenesis; peptidoglycan biosynthesis. Functionally, cell wall formation. Catalyzes the transfer of a GlcNAc subunit on undecaprenyl-pyrophosphoryl-MurNAc-pentapeptide (lipid intermediate I) to form undecaprenyl-pyrophosphoryl-MurNAc-(pentapeptide)GlcNAc (lipid intermediate II). The protein is UDP-N-acetylglucosamine--N-acetylmuramyl-(pentapeptide) pyrophosphoryl-undecaprenol N-acetylglucosamine transferase of Prochlorococcus marinus subsp. pastoris (strain CCMP1986 / NIES-2087 / MED4).